The chain runs to 232 residues: Large ribosomal subunit protein uL1 (232 aa).

The protein belongs to the universal ribosomal protein uL1 family. In terms of assembly, part of the 50S ribosomal subunit.

Its function is as follows. Binds directly to 23S rRNA. The L1 stalk is quite mobile in the ribosome, and is involved in E site tRNA release. In terms of biological role, protein L1 is also a translational repressor protein, it controls the translation of the L11 operon by binding to its mRNA. This is Large ribosomal subunit protein uL1 from Sinorhizobium fredii (strain NBRC 101917 / NGR234).